A 244-amino-acid chain; its full sequence is Trypsin (244 aa).

The signal sequence occupies residues 1–15 (MKFLVILVLLGAAVA). The propeptide at 16 to 21 (FEDDDK) is activation peptide. The region spanning 22-242 (IVGGFTCAKN…FVTWIQSTIS (221 aa)) is the Peptidase S1 domain. 6 disulfide bridges follow: cysteine 28-cysteine 158, cysteine 46-cysteine 62, cysteine 130-cysteine 231, cysteine 137-cysteine 204, cysteine 169-cysteine 183, and cysteine 194-cysteine 218. Histidine 61 (charge relay system) is an active-site residue. Ca(2+)-binding residues include glutamate 73, asparagine 75, and glutamate 83. Catalysis depends on aspartate 105, which acts as the Charge relay system. Serine 198 acts as the Charge relay system in catalysis.

This sequence belongs to the peptidase S1 family. Ca(2+) serves as cofactor.

It is found in the secreted. The protein localises to the extracellular space. It carries out the reaction Preferential cleavage: Arg-|-Xaa, Lys-|-Xaa.. The polypeptide is Trypsin (Xenopus laevis (African clawed frog)).